A 49-amino-acid chain; its full sequence is MAVPKRRNSKTRGAKRRTHYKIKLSSVIKCSNCGAYKRPHRVCPSCGEY.

The protein belongs to the bacterial ribosomal protein bL32 family.

In Nautilia profundicola (strain ATCC BAA-1463 / DSM 18972 / AmH), this protein is Large ribosomal subunit protein bL32.